The primary structure comprises 368 residues: MKVLLLLCSCILVIHALPFEQRGFWDFSMDDGMAMMKDEEASGVGPIPTESIPDVGLPPMDLCPFGCQCHLRVVQCSDLGLTSIPKNLPKDTTLLDLQNNKITEIKKDDFKGLTNLYALVIVNNKISKINEKAFEPLQKMQKLYISKNNLEEIPKNLPKSLVELRIHENKIKKVPKGVFSGLKNMNCIEMGGNPLENGGIEAGAFDGLKLNYLRVSEAKLSGIPKGLPSTLNELHLDNNKIQAIEKEDLSQYASLYRLGLGHNNIRMIENGSLSFMPVLRELHLDNNKLSKVPPGLPDMKLLQVVYLHSNNITQVGVNDFCPIGFGVKRAYYNGISLFNNPVPYWEVQPATFRCVTDRLAIQFGNYRK.

The first 16 residues, 1 to 16 (MKVLLLLCSCILVIHA), serve as a signal peptide directing secretion. Positions 17–37 (LPFEQRGFWDFSMDDGMAMMK) are excised as a propeptide. 2 disulfides stabilise this stretch: C63–C69 and C67–C76. 12 LRR repeats span residues 82 to 102 (TSIPKNLPKDTTLLDLQNNKI), 103 to 126 (TEIKKDDFKGLTNLYALVIVNNKI), 127 to 150 (SKINEKAFEPLQKMQKLYISKNNL), 151 to 171 (EEIPKNLPKSLVELRIHENKI), 172 to 195 (KKVPKGVFSGLKNMNCIEMGGNPL), 196 to 220 (ENGGIEAGAFDGLKLNYLRVSEAKL), 221 to 241 (SGIPKGLPSTLNELHLDNNKI), 242 to 265 (QAIEKEDLSQYASLYRLGLGHNNI), 266 to 289 (RMIENGSLSFMPVLRELHLDNNKL), 290 to 312 (SKVPPGLPDMKLLQVVYLHSNNI), 313 to 342 (TQVGVNDFCPIGFGVKRAYYNGISLFNNPV), and 343 to 368 (PYWEVQPATFRCVTDRLAIQFGNYRK). Residues N270 and N311 are each glycosylated (N-linked (GlcNAc...) asparagine). A disulfide bridge connects residues C321 and C354.

It belongs to the small leucine-rich proteoglycan (SLRP) family. SLRP class I subfamily.

The protein localises to the secreted. It localises to the extracellular space. It is found in the extracellular matrix. May be involved in collagen fiber assembly. This is Biglycan (bgn) from Xenopus laevis (African clawed frog).